Reading from the N-terminus, the 1944-residue chain is Anaphase-promoting complex subunit 1 (1944 aa).

2 positions are modified to phosphoserine: Ser-51 and Ser-60. Thr-291 carries the phosphothreonine modification. The segment at 312–343 (ESPVASPFQNYSSIHSQSRSTSSPSLHSRSPS) is disordered. Ser-313, Ser-341, Ser-343, Ser-355, Ser-362, Ser-373, and Ser-377 each carry phosphoserine. The segment covering 323-343 (SSIHSQSRSTSSPSLHSRSPS) has biased composition (low complexity). Residues 370-395 (NLSSHSQSPKRHSISHSPSGSFNDSF) are disordered. A compositionally biased stretch (polar residues) spans 384–393 (SHSPSGSFND). A Phosphothreonine modification is found at Thr-537. Residues Ser-547 and Ser-555 each carry the phosphoserine modification. Position 571 is a phosphotyrosine (Tyr-571). 3 positions are modified to phosphoserine: Ser-680, Ser-686, and Ser-688. Residues 991–1014 (NLPRGKSVLSSEVSSGTEAEEEDD) are disordered. Residues 998–1007 (VLSSEVSSGT) are compositionally biased toward polar residues. PC repeat units lie at residues 1297–1325 (AAGLALGMVCLGHGSNLIGMSDLNVPEQL), 1366–1404 (GATLALAMIYLKTNNRSIADWLRAPDTMYLLDFVKPEFL), 1467–1501 (GACLSLGFRFAGSENLSAFSCLHKFAKDFMNYLSA), and 1520–1552 (LLSLAMVMAGSGNLKVLQLCRFLHMKTGGEMNY).

It belongs to the APC1 family. The mammalian APC/C is composed at least of 14 distinct subunits ANAPC1, ANAPC2, CDC27/APC3, ANAPC4, ANAPC5, CDC16/APC6, ANAPC7, CDC23/APC8, ANAPC10, ANAPC11, CDC26/APC12, ANAPC13, ANAPC15 and ANAPC16 that assemble into a complex of at least 19 chains with a combined molecular mass of around 1.2 MDa; APC/C interacts with FZR1 and FBXO5. Phosphorylated. Phosphorylation on Ser-355 occurs specifically during mitosis. As to expression, abundantly expressed in proliferating fibroblasts, juvenile testis, adult brain and epididymis.

The protein operates within protein modification; protein ubiquitination. Functionally, component of the anaphase promoting complex/cyclosome (APC/C), a cell cycle-regulated E3 ubiquitin ligase that controls progression through mitosis and the G1 phase of the cell cycle. The APC/C complex acts by mediating ubiquitination and subsequent degradation of target proteins: it mainly mediates the formation of 'Lys-11'-linked polyubiquitin chains and, to a lower extent, the formation of 'Lys-48'- and 'Lys-63'-linked polyubiquitin chains. The APC/C complex catalyzes assembly of branched 'Lys-11'-/'Lys-48'-linked branched ubiquitin chains on target proteins. This Mus musculus (Mouse) protein is Anaphase-promoting complex subunit 1 (Anapc1).